The chain runs to 693 residues: Serine/threonine-protein kinase Pkn1 (693 aa).

The 270-residue stretch at 59–328 folds into the Protein kinase domain; sequence FRLVRRLGRG…QVALAEHVRV (270 aa). Residues 65-73 and Lys88 each bind ATP; that span reads LGRGGMGAV. Asp180 acts as the Proton acceptor in catalysis. The 99-residue stretch at 393 to 491 folds into the PilZ domain; it reads LVEVPVQVVL…LKAAVDALLQ (99 aa). Residues 630–663 form a TPR repeat; the sequence is ARSHFQSGGALERDGQLSQALDQYERGLKLAPLE.

The protein belongs to the protein kinase superfamily. Ser/Thr protein kinase family. Autophosphorylated.

It catalyses the reaction L-seryl-[protein] + ATP = O-phospho-L-seryl-[protein] + ADP + H(+). The enzyme catalyses L-threonyl-[protein] + ATP = O-phospho-L-threonyl-[protein] + ADP + H(+). Its activity is regulated as follows. May be regulated by calcium or a calmodulin-like protein. Functionally, plays an essential role in proper timing of early development events. The sequence is that of Serine/threonine-protein kinase Pkn1 (pkn1) from Myxococcus xanthus.